The primary structure comprises 653 residues: Threonine--tRNA ligase (653 aa).

The TGS domain occupies 1-61 (MIKITFPDGN…NEDAEVKLFK (61 aa)). A catalytic region spans residues 243 to 542 (DHRKIGKELE…LIEHTAGKFP (300 aa)). Zn(2+)-binding residues include Cys338, His389, and His519.

Belongs to the class-II aminoacyl-tRNA synthetase family. Homodimer. Zn(2+) serves as cofactor.

The protein localises to the cytoplasm. The enzyme catalyses tRNA(Thr) + L-threonine + ATP = L-threonyl-tRNA(Thr) + AMP + diphosphate + H(+). Its function is as follows. Catalyzes the attachment of threonine to tRNA(Thr) in a two-step reaction: L-threonine is first activated by ATP to form Thr-AMP and then transferred to the acceptor end of tRNA(Thr). Also edits incorrectly charged L-seryl-tRNA(Thr). This is Threonine--tRNA ligase from Porphyromonas gingivalis (strain ATCC 33277 / DSM 20709 / CIP 103683 / JCM 12257 / NCTC 11834 / 2561).